The chain runs to 75 residues: Cruzioseptin-7 (75 aa).

An N-terminal signal peptide occupies residues Met-1–Cys-22. Positions Glu-23–Glu-43 are excised as a propeptide. The segment at Glu-25 to Lys-44 is disordered. Acidic residues predominate over residues Glu-30–Ser-41.

Expressed by the skin glands.

The protein localises to the secreted. Has antimicrobial activity. This chain is Cruzioseptin-7, found in Cruziohyla calcarifer (Splendid leaf frog).